A 195-amino-acid polypeptide reads, in one-letter code: Probable GTP-binding protein EngB (195 aa).

The EngB-type G domain occupies 24-195 (ELPEIALAGR…EAWDAILEKL (172 aa)). Residues 32 to 39 (GRSNVGKS), 59 to 63 (GKTQL), 77 to 80 (DVPG), 144 to 147 (TKAD), and 176 to 178 (FSS) contribute to the GTP site. Positions 39 and 61 each coordinate Mg(2+).

The protein belongs to the TRAFAC class TrmE-Era-EngA-EngB-Septin-like GTPase superfamily. EngB GTPase family. Mg(2+) is required as a cofactor.

Functionally, necessary for normal cell division and for the maintenance of normal septation. This is Probable GTP-binding protein EngB from Streptococcus pneumoniae (strain Hungary19A-6).